Reading from the N-terminus, the 609-residue chain is Alpha-fetoprotein (609 aa).

The signal sequence occupies residues 1–18; that stretch reads MKWVESIFLIFLLNFTES. Albumin domains lie at 19–210, 211–402, and 403–601; these read RTLH…ATVT, KELR…EELQ, and KYIQ…KLIS. His22 contacts Cu(2+). Residue Asn42 is glycosylated (N-linked (GlcNAc...) asparagine). 8 cysteine pairs are disulfide-bonded: Cys99–Cys114, Cys113–Cys124, Cys148–Cys193, Cys192–Cys201, Cys224–Cys270, Cys269–Cys277, Cys289–Cys303, and Cys302–Cys313. A phosphoserine mark is found at Ser111, Ser115, and Ser117. Residue Asn251 is glycosylated (N-linked (GlcNAc...) asparagine). Ser344 is modified (phosphoserine). 7 disulfide bridges follow: Cys384–Cys393, Cys416–Cys462, Cys461–Cys472, Cys485–Cys501, Cys500–Cys511, Cys538–Cys583, and Cys582–Cys591. Ser444 is subject to Phosphoserine.

The protein belongs to the ALB/AFP/VDB family. Dimeric and trimeric forms have been found in addition to the monomeric form. As to expression, plasma. Synthesized by the fetal liver and yolk sac.

It localises to the secreted. Functionally, binds copper, nickel, and fatty acids as well as, and bilirubin less well than, serum albumin. This chain is Alpha-fetoprotein (AFP), found in Pan troglodytes (Chimpanzee).